Consider the following 257-residue polypeptide: Cyclin-C1-1 (257 aa).

Belongs to the cyclin family. Cyclin C subfamily.

The polypeptide is Cyclin-C1-1 (Oryza sativa subsp. japonica (Rice)).